The following is a 372-amino-acid chain: Cytochrome b (372 aa).

4 helical membrane-spanning segments follow: residues 29–49 (FGSM…ILSW), 73–95 (WFIR…LHIL), 108–128 (VWYS…LGYV), and 174–194 (FFSF…IHLI). 2 residues coordinate heme b: H79 and H93. Heme b contacts are provided by H178 and H192. H197 is a binding site for a ubiquinone. 4 consecutive transmembrane segments (helical) span residues 220 to 240 (FSLK…FCIF), 284 to 301 (LGGV…VFLG), 311 to 336 (MVKT…IMGG), and 344 to 363 (DILG…IMLL).

This sequence belongs to the cytochrome b family. In terms of assembly, the main subunits of complex b-c1 are: cytochrome b, cytochrome c1 and the Rieske protein. Heme b is required as a cofactor.

Its subcellular location is the mitochondrion inner membrane. Functionally, component of the ubiquinol-cytochrome c reductase complex (complex III or cytochrome b-c1 complex) that is part of the mitochondrial respiratory chain. The b-c1 complex mediates electron transfer from ubiquinol to cytochrome c. Contributes to the generation of a proton gradient across the mitochondrial membrane that is then used for ATP synthesis. The polypeptide is Cytochrome b (mt:Cyt-b) (Leptorhynchoides thecatus (Thorny-headed worm)).